Here is a 446-residue protein sequence, read N- to C-terminus: Coiled-coil domain-containing protein 112 (446 aa).

Coiled coils occupy residues leucine 23–aspartate 116 and glutamate 219–arginine 400. 2 disordered regions span residues asparagine 247 to alanine 277 and valine 394 to isoleucine 430. A compositionally biased stretch (basic and acidic residues) spans asparagine 255–arginine 268.

It is found in the cytoplasm. It localises to the cytoskeleton. Its subcellular location is the microtubule organizing center. The protein resides in the centrosome. The protein localises to the centriolar satellite. In Macaca fascicularis (Crab-eating macaque), this protein is Coiled-coil domain-containing protein 112 (CCDC112).